The sequence spans 318 residues: L-lactate dehydrogenase (318 aa).

NAD(+) is bound by residues V14, D35, K40, and Y66. Substrate is bound by residues R89 and 121-124 (NPVD). S144 provides a ligand contact to NAD(+). 149–152 (DTAR) contributes to the substrate binding site. Residue H176 is the Proton acceptor of the active site. Y220 is modified (phosphotyrosine). A substrate-binding site is contributed by T229.

It belongs to the LDH/MDH superfamily. LDH family. As to quaternary structure, homotetramer.

It is found in the cytoplasm. It catalyses the reaction (S)-lactate + NAD(+) = pyruvate + NADH + H(+). Its pathway is fermentation; pyruvate fermentation to lactate; (S)-lactate from pyruvate: step 1/1. Catalyzes the conversion of lactate to pyruvate. This is L-lactate dehydrogenase from Staphylococcus haemolyticus (strain JCSC1435).